A 321-amino-acid chain; its full sequence is Lipoyl synthase (321 aa).

Residues Cys-68, Cys-73, Cys-79, Cys-94, Cys-98, Cys-101, and Ser-308 each coordinate [4Fe-4S] cluster. In terms of domain architecture, Radical SAM core spans 80-297; that stretch reads FNHGTATFMI…KAEAIAMGFT (218 aa).

This sequence belongs to the radical SAM superfamily. Lipoyl synthase family. The cofactor is [4Fe-4S] cluster.

Its subcellular location is the cytoplasm. It catalyses the reaction [[Fe-S] cluster scaffold protein carrying a second [4Fe-4S](2+) cluster] + N(6)-octanoyl-L-lysyl-[protein] + 2 oxidized [2Fe-2S]-[ferredoxin] + 2 S-adenosyl-L-methionine + 4 H(+) = [[Fe-S] cluster scaffold protein] + N(6)-[(R)-dihydrolipoyl]-L-lysyl-[protein] + 4 Fe(3+) + 2 hydrogen sulfide + 2 5'-deoxyadenosine + 2 L-methionine + 2 reduced [2Fe-2S]-[ferredoxin]. The protein operates within protein modification; protein lipoylation via endogenous pathway; protein N(6)-(lipoyl)lysine from octanoyl-[acyl-carrier-protein]: step 2/2. Its function is as follows. Catalyzes the radical-mediated insertion of two sulfur atoms into the C-6 and C-8 positions of the octanoyl moiety bound to the lipoyl domains of lipoate-dependent enzymes, thereby converting the octanoylated domains into lipoylated derivatives. This chain is Lipoyl synthase, found in Pectobacterium carotovorum subsp. carotovorum (strain PC1).